Consider the following 255-residue polypeptide: MIALSIAGFDNSGGAGTLADIRTFKHFGIYGVAVITALAVQNTQKVYEVFPIPPDVVKEELKAIFEDFPIKGVKIGMLANKEIAEVVYETLKSKKTNFIVLDPVFRSKSGRELLSEEGVEFLKSEFIKIVDLITPNVPEAEILCGEEIKSLEDVKNCAQKIYSLGAKSVLIKGGHLKGNYAIDILYDGKSFYEFKAPKIAGKTPRGTGCVYSSAILANYLRHKDLIKAIKTAKDFITEAIKNSKKLGKGYEIMDF.

A 4-amino-5-hydroxymethyl-2-methylpyrimidine-binding site is contributed by Gln41.

Belongs to the ThiD family.

The enzyme catalyses 4-amino-5-hydroxymethyl-2-methylpyrimidine + ATP = 4-amino-2-methyl-5-(phosphooxymethyl)pyrimidine + ADP + H(+). It carries out the reaction 4-amino-2-methyl-5-(phosphooxymethyl)pyrimidine + ATP = 4-amino-2-methyl-5-(diphosphooxymethyl)pyrimidine + ADP. It functions in the pathway cofactor biosynthesis; thiamine diphosphate biosynthesis; 4-amino-2-methyl-5-diphosphomethylpyrimidine from 5-amino-1-(5-phospho-D-ribosyl)imidazole: step 2/3. The protein operates within cofactor biosynthesis; thiamine diphosphate biosynthesis; 4-amino-2-methyl-5-diphosphomethylpyrimidine from 5-amino-1-(5-phospho-D-ribosyl)imidazole: step 3/3. Functionally, catalyzes the phosphorylation of hydroxymethylpyrimidine phosphate (HMP-P) to HMP-PP, and of HMP to HMP-P. The sequence is that of Hydroxymethylpyrimidine/phosphomethylpyrimidine kinase (thiD) from Aquifex aeolicus (strain VF5).